Consider the following 56-residue polypeptide: Large ribosomal subunit protein bL32 (56 aa).

Positions methionine 1–glutamate 35 are disordered.

It belongs to the bacterial ribosomal protein bL32 family.

The protein is Large ribosomal subunit protein bL32 of Proteus mirabilis (strain HI4320).